A 202-amino-acid chain; its full sequence is uncharacterized protein (202 aa).

Positions 1–78 constitute a GST N-terminal domain; sequence MKLVGSYTSP…YIELMNVAPA (78 aa). Glutathione contacts are provided by residues Ser9, Val49, and 62–63; that span reads DS. The GST C-terminal domain occupies 83–202; the sequence is DPLESLRVRK…SFARTEPPKA (120 aa).

It belongs to the GST superfamily. HSP26 family.

In terms of biological role, glutathione (GSH) transferase homolog, that might be involved in selenium metabolism. This is an uncharacterized protein from Escherichia coli (strain K12).